Here is a 247-residue protein sequence, read N- to C-terminus: Flagellin B1 (247 aa).

Positions 1-20 (MNKLLRKVRKAFSLKADNKA) are excised as a propeptide.

This sequence belongs to the archaeal flagellin family. Post-translationally, glycosylated.

Its subcellular location is the archaeal flagellum. In terms of biological role, flagellin is the subunit protein which polymerizes to form the filaments of archaeal flagella. The polypeptide is Flagellin B1 (Thermoplasma volcanium (strain ATCC 51530 / DSM 4299 / JCM 9571 / NBRC 15438 / GSS1)).